A 204-amino-acid chain; its full sequence is N-(5'-phosphoribosyl)anthranilate isomerase (204 aa).

It belongs to the TrpF family.

The enzyme catalyses N-(5-phospho-beta-D-ribosyl)anthranilate = 1-(2-carboxyphenylamino)-1-deoxy-D-ribulose 5-phosphate. It participates in amino-acid biosynthesis; L-tryptophan biosynthesis; L-tryptophan from chorismate: step 3/5. In Bacillus cereus (strain G9842), this protein is N-(5'-phosphoribosyl)anthranilate isomerase.